We begin with the raw amino-acid sequence, 348 residues long: S-adenosylmethionine:tRNA ribosyltransferase-isomerase (348 aa).

This sequence belongs to the QueA family. Monomer.

It localises to the cytoplasm. The catalysed reaction is 7-aminomethyl-7-carbaguanosine(34) in tRNA + S-adenosyl-L-methionine = epoxyqueuosine(34) in tRNA + adenine + L-methionine + 2 H(+). It participates in tRNA modification; tRNA-queuosine biosynthesis. Its function is as follows. Transfers and isomerizes the ribose moiety from AdoMet to the 7-aminomethyl group of 7-deazaguanine (preQ1-tRNA) to give epoxyqueuosine (oQ-tRNA). This chain is S-adenosylmethionine:tRNA ribosyltransferase-isomerase, found in Amoebophilus asiaticus (strain 5a2).